Consider the following 285-residue polypeptide: HTH-type transcriptional regulator MurR (285 aa).

Residues 1–77 form the HTH rpiR-type domain; the sequence is MLYLTKIRNA…MALIGEYSAS (77 aa). The H-T-H motif DNA-binding region spans 37–56; it reads SRKMAKQLGISQSSIVKFAQ. The SIS domain occupies 128 to 268; sequence IIEVISKAPF…FVGLVQLNDV (141 aa).

As to quaternary structure, homotetramer.

It functions in the pathway amino-sugar metabolism; N-acetylmuramate degradation [regulation]. Represses the expression of the murPQ operon involved in the uptake and degradation of N-acetylmuramic acid (MurNAc). Binds to two adjacent inverted repeats within the operator region. MurNAc 6-phosphate, the substrate of MurQ, is the specific inducer that weakens binding of MurR to the operator. This chain is HTH-type transcriptional regulator MurR, found in Escherichia coli O157:H7.